Consider the following 161-residue polypeptide: Allophycocyanin beta chain (161 aa).

Asn71 is modified (N4-methylasparagine). A (2R,3E)-phycocyanobilin-binding site is contributed by Cys81.

It belongs to the phycobiliprotein family. Heterodimer of an alpha and a beta chain. Contains one covalently linked phycocyanobilin chromophore.

It localises to the cellular thylakoid membrane. In terms of biological role, light-harvesting photosynthetic bile pigment-protein from the phycobiliprotein complex. Allophycocyanin has a maximum absorption at approximately 650 nanometers. The sequence is that of Allophycocyanin beta chain (apcB) from Anabaena variabilis.